A 171-amino-acid chain; its full sequence is Ribosome maturation factor RimM (171 aa).

In terms of domain architecture, PRC barrel spans 97–170 (KLNYFSWDHY…IIYMKLPVGL (74 aa)).

This sequence belongs to the RimM family. Binds ribosomal protein uS19.

Its subcellular location is the cytoplasm. In terms of biological role, an accessory protein needed during the final step in the assembly of 30S ribosomal subunit, possibly for assembly of the head region. Essential for efficient processing of 16S rRNA. May be needed both before and after RbfA during the maturation of 16S rRNA. It has affinity for free ribosomal 30S subunits but not for 70S ribosomes. This is Ribosome maturation factor RimM from Azobacteroides pseudotrichonymphae genomovar. CFP2.